A 348-amino-acid chain; its full sequence is Probable mitochondrial adenine nucleotide transporter BTL1 (348 aa).

3 Solcar repeats span residues 46–129 (SREA…VKRA), 157–241 (SWIS…MKTS), and 251–338 (LSRP…WKDI). Helical transmembrane passes span 52 to 72 (FLSG…LETI), 104 to 124 (GNEI…GTFE), 156 to 176 (ISWI…STLV), 213 to 233 (FYAG…CYYF), 256 to 276 (MLVL…PLEV), and 321 to 341 (VMPS…ILLA).

It belongs to the mitochondrial carrier (TC 2.A.29) family.

It localises to the mitochondrion inner membrane. Probable mitochondrial adenylate carrier that catalyzes the transport of ATP, ADP and AMP. This chain is Probable mitochondrial adenine nucleotide transporter BTL1, found in Arabidopsis thaliana (Mouse-ear cress).